A 105-amino-acid polypeptide reads, in one-letter code: NADH-quinone oxidoreductase subunit K (105 aa).

3 consecutive transmembrane segments (helical) span residues 4–24 (LTHY…GVIV), 28–48 (IIVI…SLVA), and 66–86 (LSIF…ALIV).

The protein belongs to the complex I subunit 4L family. As to quaternary structure, NDH-1 is composed of 14 different subunits. Subunits NuoA, H, J, K, L, M, N constitute the membrane sector of the complex.

It is found in the cell inner membrane. The enzyme catalyses a quinone + NADH + 5 H(+)(in) = a quinol + NAD(+) + 4 H(+)(out). Functionally, NDH-1 shuttles electrons from NADH, via FMN and iron-sulfur (Fe-S) centers, to quinones in the respiratory chain. The immediate electron acceptor for the enzyme in this species is believed to be ubiquinone. Couples the redox reaction to proton translocation (for every two electrons transferred, four hydrogen ions are translocated across the cytoplasmic membrane), and thus conserves the redox energy in a proton gradient. The chain is NADH-quinone oxidoreductase subunit K from Akkermansia muciniphila (strain ATCC BAA-835 / DSM 22959 / JCM 33894 / BCRC 81048 / CCUG 64013 / CIP 107961 / Muc).